The primary structure comprises 433 residues: CinA-like protein (433 aa).

This sequence belongs to the CinA family.

The protein is CinA-like protein of Frankia casuarinae (strain DSM 45818 / CECT 9043 / HFP020203 / CcI3).